Here is a 57-residue protein sequence, read N- to C-terminus: Lantibiotic nukacin (57 aa).

Positions 1–30 (MENSKVMKDIEVANLLEEVQEDELNEVLGA) are excised as a propeptide. The segment at residues 39-44 (TVSHDC) is a cross-link (beta-methyllanthionine (Thr-Cys)). 2 cross-links (lanthionine (Ser-Cys)) span residues 41 to 55 (SHDC…VFTC) and 48 to 56 (SFQFVFTCC). Position 54 is a 2,3-didehydrobutyrine (Thr-54).

In terms of processing, maturation of lantibiotics involves the enzymatic conversion of Thr, and Ser into dehydrated AA and the formation of thioether bonds with cysteine. This is followed by membrane translocation and cleavage of the modified precursor.

The protein localises to the secreted. Its function is as follows. Lanthionine-containing peptide antibiotic (lantibiotic) active on Gram-positive bacteria. The bactericidal activity of lantibiotics is based on depolarization of energized bacterial cytoplasmic membranes, initiated by the formation of aqueous transmembrane pores. This is Lantibiotic nukacin from Staphylococcus simulans.